The chain runs to 209 residues: Guanylate kinase (209 aa).

Residues 7–185 (GNLYIVAAPS…AAMELQSIVI (179 aa)) form the Guanylate kinase-like domain. 14-21 (APSGGGKT) contacts ATP.

It belongs to the guanylate kinase family.

It is found in the cytoplasm. It carries out the reaction GMP + ATP = GDP + ADP. Essential for recycling GMP and indirectly, cGMP. In Legionella pneumophila (strain Paris), this protein is Guanylate kinase.